A 621-amino-acid chain; its full sequence is Cystathionine gamma-synthase (621 aa).

K429 carries the post-translational modification N6-(pyridoxal phosphate)lysine.

This sequence belongs to the trans-sulfuration enzymes family. MET7 subfamily. In terms of assembly, both met-3 and met-7 are required to form a functional cystathionine gamma-synthase. The cofactor is pyridoxal 5'-phosphate.

The catalysed reaction is O-succinyl-L-homoserine + L-cysteine = L,L-cystathionine + succinate + H(+). It functions in the pathway amino-acid biosynthesis; L-methionine biosynthesis via de novo pathway; L-cystathionine from O-succinyl-L-homoserine: step 1/1. Its function is as follows. Catalyzes the formation of L-cystathionine from O-succinyl-L-homoserine (OSHS) and L-cysteine, via a gamma-replacement reaction. In the absence of thiol, catalyzes gamma-elimination to form 2-oxobutanoate, succinate and ammonia. In Neurospora crassa (strain ATCC 24698 / 74-OR23-1A / CBS 708.71 / DSM 1257 / FGSC 987), this protein is Cystathionine gamma-synthase (met-7).